Reading from the N-terminus, the 456-residue chain is Equilibrative nucleoside transporter 2 (456 aa).

A helical membrane pass occupies residues 13–33; sequence LVGISFFILGLGTLLPWNFFI. An N-linked (GlcNAc...) asparagine glycan is attached at asparagine 56. 5 helical membrane passes run 69–89, 98–118, 123–143, 161–181, and 192–212; these read WVTL…SFLY, ILGS…LVKV, GLFF…CAVL, LFLS…LMSL, and LGYF…YLSL. The disordered stretch occupies residues 248-277; sequence GVPISPQQASPTLDLDPEKEPEPEEPQKPG. Serine 252 carries the phosphoserine modification. Basic and acidic residues predominate over residues 263–275; it reads DPEKEPEPEEPQK. Transmembrane regions (helical) follow at residues 288-308, 323-343, 360-380, 396-416, and 432-452; these read IWLT…VFPA, WGLF…DWLG, LLPL…LCHV, FITF…LTMC, and ALMT…SFLF.

This sequence belongs to the SLC29A/ENT transporter (TC 2.A.57) family.

Its subcellular location is the apical cell membrane. It localises to the basolateral cell membrane. The protein localises to the nucleus membrane. The catalysed reaction is inosine(in) = inosine(out). It carries out the reaction adenosine(in) = adenosine(out). It catalyses the reaction uridine(out) = uridine(in). The enzyme catalyses thymidine(in) = thymidine(out). The catalysed reaction is hypoxanthine(out) = hypoxanthine(in). It carries out the reaction adenine(out) = adenine(in). It catalyses the reaction cytidine(in) = cytidine(out). The enzyme catalyses thymine(out) = thymine(in). The catalysed reaction is uracil(in) = uracil(out). It carries out the reaction guanine(out) = guanine(in). It catalyses the reaction guanosine(in) = guanosine(out). Functionally, bidirectional uniporter involved in the facilitative transport of nucleosides and nucleobases, and contributes to maintaining their cellular homeostasis. Functions as a Na(+)-independent, passive transporter. Involved in the transport of nucleosides such as inosine, adenosine, uridine, thymidine, cytidine and guanosine. Also able to transport purine nucleobases (hypoxanthine, adenine, guanine) and pyrimidine nucleobases (thymine, uracil). Involved in nucleoside transport at basolateral membrane of kidney cells, allowing liver absorption of nucleoside metabolites. Mediates apical nucleoside uptake into Sertoli cells, thereby regulating the transport of nucleosides in testis across the blood-testis-barrier. Mediates both the influx and efflux of hypoxanthine in skeletal muscle microvascular endothelial cells to control the amount of intracellular hypoxanthine available for xanthine oxidase-mediated ROS production. In Mus musculus (Mouse), this protein is Equilibrative nucleoside transporter 2.